The sequence spans 572 residues: Proline--tRNA ligase (572 aa).

This sequence belongs to the class-II aminoacyl-tRNA synthetase family. ProS type 1 subfamily. Homodimer.

It is found in the cytoplasm. The catalysed reaction is tRNA(Pro) + L-proline + ATP = L-prolyl-tRNA(Pro) + AMP + diphosphate. Functionally, catalyzes the attachment of proline to tRNA(Pro) in a two-step reaction: proline is first activated by ATP to form Pro-AMP and then transferred to the acceptor end of tRNA(Pro). As ProRS can inadvertently accommodate and process non-cognate amino acids such as alanine and cysteine, to avoid such errors it has two additional distinct editing activities against alanine. One activity is designated as 'pretransfer' editing and involves the tRNA(Pro)-independent hydrolysis of activated Ala-AMP. The other activity is designated 'posttransfer' editing and involves deacylation of mischarged Ala-tRNA(Pro). The misacylated Cys-tRNA(Pro) is not edited by ProRS. This is Proline--tRNA ligase from Escherichia coli O157:H7.